We begin with the raw amino-acid sequence, 801 residues long: MSLLHIAVLLPLIFALIIPFLYRFVKRIHLGWFVLPVPIVLFIYFISLISMTMSGNNVMKNLNWMPHIGMNFNLYVDGLGLLFSLLITGIGSLVVLYSIGYLSKSEQLGNFYCYLLLFMGAMLGVVLSDNFIILYLFWELTSFSSFLLISFWREKKASIYGAQKSLIITVLGGLSMLGGIILLSLATDTFSIQAMISKASDIQNSPFFILVMILFMIGAFTKSAQVPFYIWLPDAMEAPTPVSAYLHSATMVKAGLYLIARITPIFAISEGWVWTITLVGLITLFWASLNATKQHDLKGILAFSTVSQLGMIMSMLGIGAVSYHYQGANSQLYVAGFVAAIFHLINHATFKGALFMITGGIDHSTGTRDVKKLGGLLTIMPISFTLTVITTLSMAGVPPFNGFLSKEKFLESMINVTHLNLMSLNTLGILLPIIAIIGSIFTFVYSIKFILHIFFGSYKPEALPKQAHESSILMLISPIILTSLVIVFGLFPSILTQSIIEPASVAVSQTSNITAEFHLFHGITPAFLSTIGIYIIGILLLISFSYWVRLLQAHPYQLTLNHWYDTSGQRIPGYSENITNSYVTGFSRNNLVIILGILIALTFVTVISVPFSIDFKNVSHLRVFEGATVLFLLIASTFIIFAKSRLFSIIMLSAVGYAISVLFIFFKAPDLALTQFVVESISTALFLLCFYHLPNLNRYNEKPTFKLTNAVISIGVGLSVIILGLIGYGNRHFDSITKFYQEHVFDLAHGKNMVNVILVDFRGMDTLFESSVLGIAGLGVYTMIKLRLKQKNQSSEVNDHE.

20 consecutive transmembrane segments (helical) span residues 1–21 (MSLL…IPFL), 30–50 (LGWF…SLIS), 79–99 (LGLL…LYSI), 117–137 (LFMG…LYLF), 166–186 (LIIT…LSLA), 206–226 (PFFI…SAQV), 228–250 (FYIW…HSAT), 265–285 (IFAI…ITLF), 300–320 (ILAF…GIGA), 337–357 (FVAA…LFMI), 373–393 (LGGL…TTLS), 427–447 (LGIL…VYSI), 472–492 (ILML…GLFP), 522–542 (GITP…LLLI), 591–611 (LVII…SVPF), 623–643 (VFEG…IFAK), 646–666 (LFSI…FIFF), 671–691 (LALT…LCFY), 707–727 (LTNA…GLIG), and 764–784 (MDTL…YTMI).

It belongs to the CPA3 antiporters (TC 2.A.63) subunit A family. As to quaternary structure, may form a heterooligomeric complex that consists of seven subunits: mnhA1, mnhB1, mnhC1, mnhD1, mnhE1, mnhF1 and mnhG1.

Its subcellular location is the cell membrane. Mnh complex is a Na(+)/H(+) antiporter involved in Na(+) excretion. This chain is Na(+)/H(+) antiporter subunit A1 (mnhA1), found in Staphylococcus epidermidis (strain ATCC 35984 / DSM 28319 / BCRC 17069 / CCUG 31568 / BM 3577 / RP62A).